Here is a 540-residue protein sequence, read N- to C-terminus: Glucose-6-phosphate isomerase (540 aa).

The active-site Proton donor is the Glu-350. Catalysis depends on residues His-381 and Lys-503.

The protein belongs to the GPI family.

Its subcellular location is the cytoplasm. The enzyme catalyses alpha-D-glucose 6-phosphate = beta-D-fructose 6-phosphate. The protein operates within carbohydrate biosynthesis; gluconeogenesis. Its pathway is carbohydrate degradation; glycolysis; D-glyceraldehyde 3-phosphate and glycerone phosphate from D-glucose: step 2/4. Its function is as follows. Catalyzes the reversible isomerization of glucose-6-phosphate to fructose-6-phosphate. The polypeptide is Glucose-6-phosphate isomerase (Burkholderia orbicola (strain AU 1054)).